The primary structure comprises 409 residues: Dual-specificity RNA methyltransferase RlmN (409 aa).

Glutamate 126 serves as the catalytic Proton acceptor. A Radical SAM core domain is found at 132–373 (EEGRGTLCLS…NQAGYASPIR (242 aa)). A disulfide bridge connects residues cysteine 139 and cysteine 384. [4Fe-4S] cluster contacts are provided by cysteine 146, cysteine 150, and cysteine 153. Residues 210–211 (GE), serine 242, 264–266 (SLH), and asparagine 341 each bind S-adenosyl-L-methionine. The active-site S-methylcysteine intermediate is the cysteine 384.

It belongs to the radical SAM superfamily. RlmN family. It depends on [4Fe-4S] cluster as a cofactor.

It is found in the cytoplasm. It catalyses the reaction adenosine(2503) in 23S rRNA + 2 reduced [2Fe-2S]-[ferredoxin] + 2 S-adenosyl-L-methionine = 2-methyladenosine(2503) in 23S rRNA + 5'-deoxyadenosine + L-methionine + 2 oxidized [2Fe-2S]-[ferredoxin] + S-adenosyl-L-homocysteine. The catalysed reaction is adenosine(37) in tRNA + 2 reduced [2Fe-2S]-[ferredoxin] + 2 S-adenosyl-L-methionine = 2-methyladenosine(37) in tRNA + 5'-deoxyadenosine + L-methionine + 2 oxidized [2Fe-2S]-[ferredoxin] + S-adenosyl-L-homocysteine. Functionally, specifically methylates position 2 of adenine 2503 in 23S rRNA and position 2 of adenine 37 in tRNAs. m2A2503 modification seems to play a crucial role in the proofreading step occurring at the peptidyl transferase center and thus would serve to optimize ribosomal fidelity. This is Dual-specificity RNA methyltransferase RlmN from Bartonella quintana (strain Toulouse) (Rochalimaea quintana).